We begin with the raw amino-acid sequence, 109 residues long: Period circadian protein (109 aa).

Residues 29-100 are disordered; sequence ITAPVDVDPH…TGTSSGSVQL (72 aa). Residues 69–97 show a composition bias toward low complexity; sequence SGNFNSGSNLHIGSITNTSNTGTGTSSGS.

Forms a heterodimer with timeless (TIM); the complex then translocates into the nucleus. Post-translationally, phosphorylated with a circadian rhythmicity, probably by the double-time protein (dbt). Phosphorylation could be implicated in the stability of per monomer and in the formation of heterodimer per-tim.

The protein resides in the nucleus. It is found in the cytoplasm. The protein localises to the perinuclear region. Its function is as follows. Essential for biological clock functions. Determines the period length of circadian and ultradian rhythms; an increase in PER dosage leads to shortened circadian rhythms and a decrease leads to lengthened circadian rhythms. Essential for the circadian rhythmicity of locomotor activity, eclosion behavior, and for the rhythmic component of the male courtship song that originates in the thoracic nervous system. The biological cycle depends on the rhythmic formation and nuclear localization of the TIM-PER complex. Light induces the degradation of TIM, which promotes elimination of PER. Nuclear activity of the heterodimer coordinatively regulates PER and TIM transcription through a negative feedback loop. Behaves as a negative element in circadian transcriptional loop. Does not appear to bind DNA, suggesting indirect transcriptional inhibition. The chain is Period circadian protein (per) from Loxocera albiseta (Rust fly).